Here is a 332-residue protein sequence, read N- to C-terminus: Olfactory receptor 10G6 (332 aa).

Residues 1 to 46 (MLEGVEHLLLLLLLTDVNSKELQSGNQTSVSHFILVGLHHPPQLGA) lie on the Extracellular side of the membrane. N-linked (GlcNAc...) asparagine glycosylation is present at N26. A helical membrane pass occupies residues 47 to 67 (PLFLAFLVIYLLTVSGNGLII). Residues 68-75 (LTVLVDIR) lie on the Cytoplasmic side of the membrane. Residues 76 to 96 (LHRPMCLFLCHLSFLDMTISC) traverse the membrane as a helical segment. At 97 to 120 (AIVPKMLAGFLLGSRIISFGGCVI) the chain is on the extracellular side. Residues C118 and C210 are joined by a disulfide bond. The chain crosses the membrane as a helical span at residues 121–141 (QLFSFHFLGCTECFLYTLMAY). Residues 142–160 (DRFLAICKPLHYATIMTHR) lie on the Cytoplasmic side of the membrane. Residues 161–181 (VCNSLALGTWLGGTIHSLFQT) form a helical membrane-spanning segment. Topologically, residues 182–218 (SFVFRLPFCGPNRVDYIFCDIPAMLRLACADTAINEL) are extracellular. A helical transmembrane segment spans residues 219–238 (VTFADIGFLALTCFMLILTS). Residues 239–258 (YGYIVAAILRIPSADGRRNA) lie on the Cytoplasmic side of the membrane. A helical transmembrane segment spans residues 259-279 (FSTCAAHLTVVIVYYVPCTFI). Residues 280–290 (YLRPCSQEPLD) lie on the Extracellular side of the membrane. A helical membrane pass occupies residues 291–311 (GVVAVFYTVITPLLNSIIYTL). Over 312–332 (CNKEMKAALQRLGGHKEVQPH) the chain is Cytoplasmic.

This sequence belongs to the G-protein coupled receptor 1 family.

The protein localises to the cell membrane. In terms of biological role, odorant receptor. The polypeptide is Olfactory receptor 10G6 (OR10G6) (Homo sapiens (Human)).